The chain runs to 111 residues: Large ribosomal subunit protein uL22 (111 aa).

Belongs to the universal ribosomal protein uL22 family. Part of the 50S ribosomal subunit.

This protein binds specifically to 23S rRNA; its binding is stimulated by other ribosomal proteins, e.g. L4, L17, and L20. It is important during the early stages of 50S assembly. It makes multiple contacts with different domains of the 23S rRNA in the assembled 50S subunit and ribosome. Functionally, the globular domain of the protein is located near the polypeptide exit tunnel on the outside of the subunit, while an extended beta-hairpin is found that lines the wall of the exit tunnel in the center of the 70S ribosome. The polypeptide is Large ribosomal subunit protein uL22 (Thermoanaerobacter pseudethanolicus (strain ATCC 33223 / 39E) (Clostridium thermohydrosulfuricum)).